The chain runs to 39 residues: Pro-opiomelanocortin (39 aa).

Position 1 is an N-acetylserine (serine 1). Valine 13 is subject to Valine amide. Serine 31 is subject to Phosphoserine.

The protein belongs to the POMC family.

Its subcellular location is the secreted. Precursor protein for pituitary hormones that regulate stress and environmental adaptation. In terms of biological role, stimulates the adrenal glands to release cortisol. Functionally, anorexigenic peptide. Increases the pigmentation of skin by increasing melanin production in melanocytes. This is Pro-opiomelanocortin (POMC) from Balaenoptera borealis (Sei whale).